A 234-amino-acid chain; its full sequence is Probable cyclic nucleotide phosphodiesterase Rmag_0669 (234 aa).

Fe cation contacts are provided by Asp11, His13, Asp49, Asn79, His145, His184, and His186. AMP is bound by residues His13, Asp49, and 79–80 (NH). Residue His186 coordinates AMP.

It belongs to the cyclic nucleotide phosphodiesterase class-III family. Requires Fe(2+) as cofactor.

The chain is Probable cyclic nucleotide phosphodiesterase Rmag_0669 from Ruthia magnifica subsp. Calyptogena magnifica.